The primary structure comprises 236 residues: Putative protein ZBED10P (236 aa).

This is Putative protein ZBED10P from Homo sapiens (Human).